Consider the following 208-residue polypeptide: ATP phosphoribosyltransferase (208 aa).

The protein belongs to the ATP phosphoribosyltransferase family. Short subfamily. As to quaternary structure, heteromultimer composed of HisG and HisZ subunits.

Its subcellular location is the cytoplasm. The catalysed reaction is 1-(5-phospho-beta-D-ribosyl)-ATP + diphosphate = 5-phospho-alpha-D-ribose 1-diphosphate + ATP. It functions in the pathway amino-acid biosynthesis; L-histidine biosynthesis; L-histidine from 5-phospho-alpha-D-ribose 1-diphosphate: step 1/9. In terms of biological role, catalyzes the condensation of ATP and 5-phosphoribose 1-diphosphate to form N'-(5'-phosphoribosyl)-ATP (PR-ATP). Has a crucial role in the pathway because the rate of histidine biosynthesis seems to be controlled primarily by regulation of HisG enzymatic activity. The protein is ATP phosphoribosyltransferase of Lactococcus lactis subsp. cremoris (strain MG1363).